Reading from the N-terminus, the 338-residue chain is Glycerol-3-phosphate dehydrogenase [NAD(P)+] (338 aa).

Tryptophan 20 and lysine 110 together coordinate NADPH. Positions 110, 141, and 143 each coordinate sn-glycerol 3-phosphate. Residue alanine 145 coordinates NADPH. Lysine 197, aspartate 250, serine 260, arginine 261, and asparagine 262 together coordinate sn-glycerol 3-phosphate. The Proton acceptor role is filled by lysine 197. NADPH is bound at residue arginine 261. Glutamate 287 contributes to the NADPH binding site.

Belongs to the NAD-dependent glycerol-3-phosphate dehydrogenase family.

It localises to the cytoplasm. The enzyme catalyses sn-glycerol 3-phosphate + NAD(+) = dihydroxyacetone phosphate + NADH + H(+). It carries out the reaction sn-glycerol 3-phosphate + NADP(+) = dihydroxyacetone phosphate + NADPH + H(+). It participates in membrane lipid metabolism; glycerophospholipid metabolism. In terms of biological role, catalyzes the reduction of the glycolytic intermediate dihydroxyacetone phosphate (DHAP) to sn-glycerol 3-phosphate (G3P), the key precursor for phospholipid synthesis. The chain is Glycerol-3-phosphate dehydrogenase [NAD(P)+] from Aster yellows witches'-broom phytoplasma (strain AYWB).